Here is a 198-residue protein sequence, read N- to C-terminus: Recombination protein RecR (198 aa).

The C4-type zinc finger occupies 58 to 73 (CSVCGNFTDKDPCAIC). One can recognise a Toprim domain in the interval 81–175 (SIICVIEQPK…KVTRIAHGVP (95 aa)).

This sequence belongs to the RecR family.

May play a role in DNA repair. It seems to be involved in an RecBC-independent recombinational process of DNA repair. It may act with RecF and RecO. The protein is Recombination protein RecR of Clostridium botulinum (strain ATCC 19397 / Type A).